A 341-amino-acid polypeptide reads, in one-letter code: Anthranilate phosphoribosyltransferase (341 aa).

5-phospho-alpha-D-ribose 1-diphosphate is bound by residues Gly-79, 82–83 (GD), Thr-87, 89–92 (NIST), 107–115 (KHGNRAVSS), and Ser-119. Gly-79 provides a ligand contact to anthranilate. Mg(2+) is bound at residue Ser-91. Position 110 (Asn-110) interacts with anthranilate. Anthranilate is bound at residue Arg-165. Asp-224 and Glu-225 together coordinate Mg(2+).

Belongs to the anthranilate phosphoribosyltransferase family. As to quaternary structure, homodimer. Mg(2+) is required as a cofactor.

It carries out the reaction N-(5-phospho-beta-D-ribosyl)anthranilate + diphosphate = 5-phospho-alpha-D-ribose 1-diphosphate + anthranilate. It participates in amino-acid biosynthesis; L-tryptophan biosynthesis; L-tryptophan from chorismate: step 2/5. Its function is as follows. Catalyzes the transfer of the phosphoribosyl group of 5-phosphorylribose-1-pyrophosphate (PRPP) to anthranilate to yield N-(5'-phosphoribosyl)-anthranilate (PRA). The protein is Anthranilate phosphoribosyltransferase of Bacillus cereus (strain ATCC 14579 / DSM 31 / CCUG 7414 / JCM 2152 / NBRC 15305 / NCIMB 9373 / NCTC 2599 / NRRL B-3711).